The primary structure comprises 421 residues: G/T mismatch-specific thymine DNA glycosylase (421 aa).

Residues 45-108 (PNMATVTEQQ…STKSKEKQEK (64 aa)) form a disordered region. The span at 77 to 89 (RAAEPQEPVEPKK) shows a compositional bias: basic and acidic residues. Residues 91 to 100 (ATSKKSGKST) are compositionally biased toward basic residues. Residues lysine 114 and lysine 259 each participate in a glycyl lysine isopeptide (Lys-Gly) (interchain with G-Cter in SUMO2) cross-link. Lysine 341 participates in a covalent cross-link: Glycyl lysine isopeptide (Lys-Gly) (interchain with G-Cter in SUMO); alternate. Lysine 341 is covalently cross-linked (Glycyl lysine isopeptide (Lys-Gly) (interchain with G-Cter in SUMO2); alternate).

Belongs to the uracil-DNA glycosylase (UDG) superfamily. TDG/mug family. Homodimer. Interacts with AICDA and GADD45A. In terms of processing, sumoylation on Lys-341 by either SUMO1 or SUMO2 induces dissociation of the product DNA.

It is found in the nucleus. It catalyses the reaction Hydrolyzes mismatched double-stranded DNA and polynucleotides, releasing free thymine.. In terms of biological role, DNA glycosylase that plays a key role in active DNA demethylation: specifically recognizes and binds 5-formylcytosine (5fC) and 5-carboxylcytosine (5caC) in the context of CpG sites and mediates their excision through base-excision repair (BER) to install an unmethylated cytosine. Cannot remove 5-hydroxymethylcytosine (5hmC). According to an alternative model, involved in DNA demethylation by mediating DNA glycolase activity toward 5-hydroxymethyluracil (5hmU) produced by deamination of 5hmC. Also involved in DNA repair by acting as a thymine-DNA glycosylase that mediates correction of G/T mispairs to G/C pairs: in the DNA of higher eukaryotes, hydrolytic deamination of 5-methylcytosine to thymine leads to the formation of G/T mismatches. Its role in the repair of canonical base damage is however minor compared to its role in DNA demethylation. It is capable of hydrolyzing the carbon-nitrogen bond between the sugar-phosphate backbone of the DNA and a mispaired thymine. In addition to the G/T, it can remove thymine also from C/T and T/T mispairs in the order G/T &gt;&gt; C/T &gt; T/T. It has no detectable activity on apyrimidinic sites and does not catalyze the removal of thymine from A/T pairs or from single-stranded DNA. It can also remove uracil and 5-bromouracil from mispairs with guanine. The chain is G/T mismatch-specific thymine DNA glycosylase (Tdg) from Mus musculus (Mouse).